We begin with the raw amino-acid sequence, 129 residues long: MFTFYMYLAPIVAGVLIGLNWLLAKSNPNIDKAGPFECGFTSYQQSRAAFSVAFILVAILFLPFDLEISSILPYVTSAYNNGLYGLIILIIFLMMLVIAFILEIQLRVLKIERSYDKDRSDSNYYDHEI.

3 helical membrane-spanning segments follow: residues 4–24, 48–68, and 82–102; these read FYMYLAPIVAGVLIGLNWLLA, AAFSVAFILVAILFLPFDLEI, and GLYGLIILIIFLMMLVIAFIL.

It belongs to the complex I subunit 3 family.

The protein resides in the mitochondrion membrane. The catalysed reaction is a ubiquinone + NADH + 5 H(+)(in) = a ubiquinol + NAD(+) + 4 H(+)(out). Its function is as follows. Core subunit of the mitochondrial membrane respiratory chain NADH dehydrogenase (Complex I) that is believed to belong to the minimal assembly required for catalysis. Complex I functions in the transfer of electrons from NADH to the respiratory chain. The immediate electron acceptor for the enzyme is believed to be ubiquinone. This chain is NADH-ubiquinone oxidoreductase chain 3 (NAD3), found in Candida albicans (strain SC5314 / ATCC MYA-2876) (Yeast).